Consider the following 412-residue polypeptide: UDP-galactose transporter homolog 1 (412 aa).

The chain crosses the membrane as a helical span at residues 3–23; sequence VLRLAVCISGVYAAFLLWAIA. A disordered region spans residues 31 to 51; sequence FPSVHPHPHQQPHSPSDPPPG. 4 helical membrane passes run 58–78, 139–159, 197–217, and 222–242; these read LFLN…YLSF, LLAL…IGFL, YIVV…AETS, and GGSD…IDGL. Residue Asn-244 is glycosylated (N-linked (GlcNAc...) asparagine). Helical transmembrane passes span 262-282, 325-345, 355-375, and 379-399; these read MMFT…VLPL, SALA…LFIF, TLVM…VVVF, and LTKG…VEAG.

It belongs to the nucleotide-sugar transporter family. SLC35B subfamily.

It localises to the endoplasmic reticulum membrane. In terms of biological role, may be involved in specific transport of UDP-Gal from the cytosol to the Golgi lumen. Involved in the maintenance of optimal conditions for the folding of secretory pathway proteins in the endoplasmic reticulum. In Cryptococcus neoformans var. neoformans serotype D (strain JEC21 / ATCC MYA-565) (Filobasidiella neoformans), this protein is UDP-galactose transporter homolog 1 (HUT1-A).